Consider the following 179-residue polypeptide: dCTP deaminase (179 aa).

DCTP is bound by residues 101–106 (RSTLAR) and aspartate 117. Glutamate 127 functions as the Proton donor/acceptor in the catalytic mechanism. Residue glutamine 165 participates in dCTP binding.

The protein belongs to the dCTP deaminase family. Homotrimer.

It carries out the reaction dCTP + H2O + H(+) = dUTP + NH4(+). It participates in pyrimidine metabolism; dUMP biosynthesis; dUMP from dCTP (dUTP route): step 1/2. In terms of biological role, catalyzes the deamination of dCTP to dUTP. In Caldivirga maquilingensis (strain ATCC 700844 / DSM 13496 / JCM 10307 / IC-167), this protein is dCTP deaminase.